The sequence spans 336 residues: Glyceraldehyde-3-phosphate dehydrogenase, plasmid (336 aa).

Residues 12–13 (RI), Asp-37, Arg-81, and Ser-123 each bind NAD(+). D-glyceraldehyde 3-phosphate is bound by residues 154–156 (SCT) and Thr-185. Cys-155 functions as the Nucleophile in the catalytic mechanism. Asn-186 contacts NAD(+). Residues Arg-200, 213 to 214 (TG), and Arg-236 each bind D-glyceraldehyde 3-phosphate. Asn-317 provides a ligand contact to NAD(+).

This sequence belongs to the glyceraldehyde-3-phosphate dehydrogenase family. In terms of assembly, homotetramer.

It catalyses the reaction D-glyceraldehyde 3-phosphate + phosphate + NAD(+) = (2R)-3-phospho-glyceroyl phosphate + NADH + H(+). Its pathway is carbohydrate biosynthesis; Calvin cycle. Functionally, could be involved in carbon fixation as a component of the Calvin cycle. Catalyzes the oxidative phosphorylation of glyceraldehyde 3-phosphate (G3P) to 1,3-bisphosphoglycerate (BPG) using the cofactor NAD. The first reaction step involves the formation of a hemiacetal intermediate between G3P and a cysteine residue, and this hemiacetal intermediate is then oxidized to a thioester, with concomitant reduction of NAD to NADH. The reduced NADH is then exchanged with the second NAD, and the thioester is attacked by a nucleophilic inorganic phosphate to produce BPG. The chain is Glyceraldehyde-3-phosphate dehydrogenase, plasmid (cbbGP) from Cupriavidus necator (strain ATCC 17699 / DSM 428 / KCTC 22496 / NCIMB 10442 / H16 / Stanier 337) (Ralstonia eutropha).